Reading from the N-terminus, the 502-residue chain is Chlorophyllide reductase 52.5 kDa chain (502 aa).

The next 3 membrane-spanning stretches (helical) occupy residues 70–87, 131–147, and 221–238; these read VGTI…LSFV, AIVV…GVPL, and VMIG…GPVV.

It belongs to the BchN/ChlN family. As to quaternary structure, chlorophyllide reductase is composed of three subunits; BchX, BchY and BchZ. Forms a heterodimer of one BchY and one BchZ subunit.

The protein localises to the cell membrane. The catalysed reaction is 3-deacetyl-3-vinylbacteriochlorophyllide a + 2 oxidized [2Fe-2S]-[ferredoxin] + ADP + phosphate = chlorophyllide a + 2 reduced [2Fe-2S]-[ferredoxin] + ATP + H2O + H(+). It catalyses the reaction bacteriochlorophyllide a + 2 oxidized [2Fe-2S]-[ferredoxin] + ADP + phosphate = 3-acetyl-3-devinylchlorophyllide a + 2 reduced [2Fe-2S]-[ferredoxin] + ATP + H2O + H(+). It carries out the reaction 3-deacetyl-3-(1-hydroxyethyl)bacteriochlorophyllide a + 2 oxidized [2Fe-2S]-[ferredoxin] + ADP + phosphate = 3-devinyl-3-(1-hydroxyethyl)chlorophyllide a + 2 reduced [2Fe-2S]-[ferredoxin] + ATP + H2O + H(+). It participates in porphyrin-containing compound metabolism; bacteriochlorophyll biosynthesis (light-independent). Converts chlorophylls (Chl) into bacteriochlorophylls (BChl) by reducing ring B of the tetrapyrrole. This chain is Chlorophyllide reductase 52.5 kDa chain (bchY), found in Cereibacter sphaeroides (strain ATCC 17023 / DSM 158 / JCM 6121 / CCUG 31486 / LMG 2827 / NBRC 12203 / NCIMB 8253 / ATH 2.4.1.) (Rhodobacter sphaeroides).